Here is a 94-residue protein sequence, read N- to C-terminus: Co-chaperonin GroES (94 aa).

It belongs to the GroES chaperonin family. In terms of assembly, heptamer of 7 subunits arranged in a ring. Interacts with the chaperonin GroEL.

The protein resides in the cytoplasm. Its function is as follows. Together with the chaperonin GroEL, plays an essential role in assisting protein folding. The GroEL-GroES system forms a nano-cage that allows encapsulation of the non-native substrate proteins and provides a physical environment optimized to promote and accelerate protein folding. GroES binds to the apical surface of the GroEL ring, thereby capping the opening of the GroEL channel. This chain is Co-chaperonin GroES, found in Clostridioides difficile (Peptoclostridium difficile).